The following is a 249-amino-acid chain: O-methyltransferase adaD (249 aa).

Positions 1–15 are enriched in low complexity; sequence MSSVTLTTTTTTTST. The segment at 1-26 is disordered; the sequence is MSSVTLTTTTTTTSTPPKPTPKDEPQ.

Belongs to the methyltransferase superfamily.

It catalyses the reaction 2-acetyl-3,4a,8,10,11,12a-hexahydroxy-1,4,4a,5,12,12a-hexahydrotetracene-1,12-dione + S-adenosyl-L-methionine = TAN-1612 + S-adenosyl-L-homocysteine + H(+). It participates in secondary metabolite biosynthesis. Its function is as follows. O-methyltransferase; part of the gene cluster that mediates the biosynthesis of the linear tetracyclic TAN-1612 neuropeptide Y receptor antagonist. The decaketide backbone of TAN-1612 is synthesized by the non-reducing polyketide synthase adaA via condensation of one acetyl-CoA starter unit with 9 malonyl-CoA units. The FAD-dependent monooxygenase adaC then performs hydroxylation at C2 while the polaketide chain is still attached to the NRPKS adaA. The alpha-hydroxylation step at C2 appears to be crucial for the following C18-C1 Claisen cyclization and release of the C9-hydroxyl version of TAN-1612 from the NRPKS adaA, two steps performed by the lactamase-like protein adaB. Finally, the O-methyltransferase adaD performs the C9 O-methylation to complete the biosynthesis of TAN-1612. This chain is O-methyltransferase adaD, found in Aspergillus niger.